A 65-amino-acid chain; its full sequence is Large ribosomal subunit protein bL33c (65 aa).

It belongs to the bacterial ribosomal protein bL33 family.

Its subcellular location is the plastid. It is found in the chloroplast. This chain is Large ribosomal subunit protein bL33c, found in Chaetosphaeridium globosum (Charophycean green alga).